A 210-amino-acid polypeptide reads, in one-letter code: Glutathione S-transferase P (210 aa).

The region spanning 2–81 (PPYTIVYFPV…HLGRSLGLYG (80 aa)) is the GST N-terminal domain. At tyrosine 4 the chain carries Phosphotyrosine; by EGFR. Residues tyrosine 8, arginine 14, tryptophan 39, lysine 45, 52–53 (QL), and 65–66 (QS) contribute to the glutathione site. In terms of domain architecture, GST C-terminal spans 83-204 (DQKEAALVDM…SSPDHVNRPI (122 aa)). 2 positions are modified to N6-succinyllysine: lysine 103 and lysine 116. Lysine 128 carries the N6-acetyllysine modification.

The protein belongs to the GST superfamily. Pi family. In terms of assembly, homodimer. Interacts with CDK5.

It localises to the cytoplasm. Its subcellular location is the mitochondrion. It is found in the nucleus. It carries out the reaction RX + glutathione = an S-substituted glutathione + a halide anion + H(+). It catalyses the reaction prostaglandin J2 + glutathione = prostaglandin J2-S-(R)-glutathione. The enzyme catalyses prostaglandin J2 + glutathione = prostaglandin J2-S-(S)-glutathione. The catalysed reaction is prostaglandin A2 + glutathione = prostaglandin A2-S-(S)-glutathione. It carries out the reaction 11(S)-hydroxy-14(S),15(S)-epoxy-(5Z,8Z,12E)-eicosatrienoate + glutathione = (11S,15S)-dihydroxy-14(R)-S-glutathionyl-(5Z,8Z,12E)-eicosatrienoate. Its function is as follows. Conjugation of reduced glutathione to a wide number of exogenous and endogenous hydrophobic electrophiles. Involved in the formation of glutathione conjugates of both prostaglandin A2 (PGA2) and prostaglandin J2 (PGJ2). Participates in the formation of novel hepoxilin regioisomers. Negatively regulates CDK5 activity via p25/p35 translocation to prevent neurodegeneration. This is Glutathione S-transferase P (GSTP1) from Mesocricetus auratus (Golden hamster).